A 507-amino-acid polypeptide reads, in one-letter code: Histidine ammonia-lyase (507 aa).

The segment at residues 141–143 is a cross-link (5-imidazolinone (Ala-Gly)); it reads ASG. A 2,3-didehydroalanine (Ser) modification is found at S142.

It belongs to the PAL/histidase family. Contains an active site 4-methylidene-imidazol-5-one (MIO), which is formed autocatalytically by cyclization and dehydration of residues Ala-Ser-Gly.

The protein localises to the cytoplasm. It catalyses the reaction L-histidine = trans-urocanate + NH4(+). Its pathway is amino-acid degradation; L-histidine degradation into L-glutamate; N-formimidoyl-L-glutamate from L-histidine: step 1/3. The polypeptide is Histidine ammonia-lyase (Burkholderia mallei (strain NCTC 10247)).